We begin with the raw amino-acid sequence, 361 residues long: 3-dehydroquinate synthase (361 aa).

NAD(+) contacts are provided by residues 72-77, 130-131, Lys-142, and Lys-151; these read SGEKEK and TT. Zn(2+) is bound by residues Glu-184, His-247, and His-264.

The protein belongs to the sugar phosphate cyclases superfamily. Dehydroquinate synthase family. It depends on Co(2+) as a cofactor. The cofactor is Zn(2+). Requires NAD(+) as cofactor.

The protein resides in the cytoplasm. It carries out the reaction 7-phospho-2-dehydro-3-deoxy-D-arabino-heptonate = 3-dehydroquinate + phosphate. Its pathway is metabolic intermediate biosynthesis; chorismate biosynthesis; chorismate from D-erythrose 4-phosphate and phosphoenolpyruvate: step 2/7. Functionally, catalyzes the conversion of 3-deoxy-D-arabino-heptulosonate 7-phosphate (DAHP) to dehydroquinate (DHQ). The chain is 3-dehydroquinate synthase from Bacillus cereus (strain G9842).